Reading from the N-terminus, the 149-residue chain is Large ribosomal subunit protein bL9 (149 aa).

This sequence belongs to the bacterial ribosomal protein bL9 family.

Its function is as follows. Binds to the 23S rRNA. The polypeptide is Large ribosomal subunit protein bL9 (Mycoplasma pneumoniae (strain ATCC 29342 / M129 / Subtype 1) (Mycoplasmoides pneumoniae)).